The sequence spans 86 residues: RNA-binding protein Hfq (86 aa).

A Sm domain is found at 12–73 (DIFLNQVRKE…ISTISPQKPV (62 aa)).

The protein belongs to the Hfq family. Homohexamer.

RNA chaperone that binds small regulatory RNA (sRNAs) and mRNAs to facilitate mRNA translational regulation in response to envelope stress, environmental stress and changes in metabolite concentrations. Also binds with high specificity to tRNAs. This chain is RNA-binding protein Hfq, found in Caldanaerobacter subterraneus subsp. tengcongensis (strain DSM 15242 / JCM 11007 / NBRC 100824 / MB4) (Thermoanaerobacter tengcongensis).